The sequence spans 702 residues: Pentatricopeptide repeat-containing protein At4g16390, chloroplastic (702 aa).

A chloroplast-targeting transit peptide spans 1 to 53; it reads MSFHHLCSSPSSLLHDPLPLCNLLSVYPKSTPRSFLSSYNPNSSHFHSRNLLQ. PPR repeat units lie at residues 174–208, 209–243, 244–278, 279–313, 314–348, 349–383, 384–414, 420–454, and 455–489; these read EVIL…GIKP, DNAT…GCEP, DNVT…KWRI, DAVT…GVKP, NLVI…GFTP, NWST…GLSL, TVIL…MKNC, DSWT…GFEP, and TLFV…GITP. Residues 603–688 form the Smr domain; that stretch reads LHLKSLSLGA…WFLTTSVAAK (86 aa).

The protein belongs to the PPR family. P subfamily. As to expression, expressed in leaves and flowers and at lower levels in stems and flower buds.

The protein resides in the plastid. The protein localises to the chloroplast. In terms of biological role, involved in chloroplast RNA processing. Can bind RNA. Involved in chloroplast development. Involved in chloroplast ribosomal RNA (rRNA) processing and/or translation. Required for FtsH-mediated chloroplast biogenesis. Involved in translation and accumulation of chloroplast ATP synthase subunits. The protein is Pentatricopeptide repeat-containing protein At4g16390, chloroplastic of Arabidopsis thaliana (Mouse-ear cress).